The sequence spans 147 residues: MRTYSPKPGDITRQWYVIDAQDVVLGRLATTAANILRGKHKPIYAPHVDAGDFVIIINADKVHLSGNKKTQKLAYRHSGYPGGLRSVRYDELLAKNPEKAVEKAIKGMIPKNTLGRQVLSKLKVYSGDQHPHAAQQPVPFEITQVAQ.

It belongs to the universal ribosomal protein uL13 family. As to quaternary structure, part of the 50S ribosomal subunit.

In terms of biological role, this protein is one of the early assembly proteins of the 50S ribosomal subunit, although it is not seen to bind rRNA by itself. It is important during the early stages of 50S assembly. The polypeptide is Large ribosomal subunit protein uL13 (Streptomyces avermitilis (strain ATCC 31267 / DSM 46492 / JCM 5070 / NBRC 14893 / NCIMB 12804 / NRRL 8165 / MA-4680)).